Here is a 572-residue protein sequence, read N- to C-terminus: Probable inactive glycosyltransferase 25 family member 3 (572 aa).

N-linked (GlcNAc...) asparagine glycans are attached at residues Asn52, Asn130, Asn214, and Asn337. Residues 569–572 carry the Prevents secretion from ER motif; the sequence is RDEL.

This sequence belongs to the glycosyltransferase 25 family.

The protein localises to the endoplasmic reticulum lumen. In terms of biological role, probable cell adhesion protein involved in leukocyte transmigration across the blood-brain barrier. Does not express any beta-galactosyltransferase activity in vitro. This is Probable inactive glycosyltransferase 25 family member 3 (Cercam) from Rattus norvegicus (Rat).